The chain runs to 291 residues: Oligopeptide transport system permease protein OppC (291 aa).

The next 6 helical transmembrane spans lie at 22 to 42 (VASLAALLLLFVSAYALPPLL), 85 to 105 (MLIGVCVAVISTGIAATVGAI), 116 to 136 (TLMWVVDLLLVVPSFILIAIV), 142 to 162 (NSANIMFLVLLLAGFGWMISS), 209 to 229 (ALNVAAAILAETGLSFLGFGI), and 247 to 267 (ATAFPWVFLFPASILVLILVC). The 192-residue stretch at 81–272 (MQKSMLIGVC…LILVCANLTG (192 aa)) folds into the ABC transmembrane type-1 domain.

This sequence belongs to the binding-protein-dependent transport system permease family. OppBC subfamily. In terms of assembly, the complex is composed of an ATP-binding protein (OppD), two transmembrane proteins (OppB and OppC) and a solute-binding protein (OppA).

It localises to the cell inner membrane. In terms of biological role, part of the ABC transporter complex OppABCD involved in the uptake of oligopeptides. Responsible for the translocation of the substrate across the membrane. The sequence is that of Oligopeptide transport system permease protein OppC from Mycobacterium bovis (strain ATCC BAA-935 / AF2122/97).